A 968-amino-acid chain; its full sequence is MPFTLGQRWISDTESELGLGTVVAVDARTVTLLFPSTGENRLYARSDSPVTRVMFNPGDTITSHDGWQMQVEEVKEENGLLTYIGTRLDTEESGVALREVFLDSKLVFSKPQDRLFAGQIDRMDRFALRYRARKYSSEQFRMPYSGLRGQRTSLIPHQLNIAHDVGRRHAPRVLLADEVGLGKTIEAGMILHQQLLSGAAERVLIIVPETLQHQWLVEMLRRFNLRFALFDDERYAEAQHDAYNPFDTEQLVICSLDFARRSKQRLEHLCEAEWDLLVVDEAHHLVWSEDAPSREYQAIEQLAEHVPGVLLLTATPEQLGMESHFARLRLLDPNRFHDFAQFVEEQKNYRPVADAVAMLLAGNKLSNDELNMLGEMIGEQDIEPLLQAANSDSEDAQSARQELVSMLMDRHGTSRVLFRNTRNGVKGFPKRELHTIKLPLPTQYQTAIKVSGIMGARKSAEDRARDMLYPERIYQEFEGDNATWWNFDPRVEWLMGYLTSHRSQKVLVICAKAATALQLEQVLREREGIRAAVFHEGMSIIERDRAAAWFAEEDTGAQVLLCSEIGSEGRNFQFASHMVMFDLPFNPDLLEQRIGRLDRIGQAHDIQIHVPYLEKTAQSVLVRWYHEGLDAFEHTCPTGRTIYDSVYNDLINYLASPDQTEGFDDLIKNCREQHEALKAQLEQGRDRLLEIHSNGGEKAQALAESIEEQDDDTNLIAFAMNLFDIIGINQDDRGDNMIVLTPSDHMLVPDFPGLSEDGITITFDREVALAREDAQFITWEHPLIRNGLDLILSGDTGSSTISLLKNKALPVGTLLVELIYVVEAQAPKQLQLNRFLPPTPVRMLLDKNGNNLAAQVEFETFNRQLNAVNRHTGSKLVNAVQQDVHAILQLGEAQIEKSARALIDAARNEADEKLSAELSRLEALRAVNPNIRDDELTAIESNRQQIMESLDQAGWRLDALRLIVVTHQ.

The 171-residue stretch at 164 to 334 folds into the Helicase ATP-binding domain; that stretch reads DVGRRHAPRV…FARLRLLDPN (171 aa). Position 177-184 (177-184) interacts with ATP; sequence DEVGLGKT. The short motif at 280 to 283 is the DEAH box element; sequence DEAH. Residues 490–662 enclose the Helicase C-terminal domain; sequence RVEWLMGYLT…YLASPDQTEG (173 aa).

It belongs to the SNF2/RAD54 helicase family. RapA subfamily. In terms of assembly, interacts with the RNAP. Has a higher affinity for the core RNAP than for the holoenzyme. Its ATPase activity is stimulated by binding to RNAP.

Transcription regulator that activates transcription by stimulating RNA polymerase (RNAP) recycling in case of stress conditions such as supercoiled DNA or high salt concentrations. Probably acts by releasing the RNAP, when it is trapped or immobilized on tightly supercoiled DNA. Does not activate transcription on linear DNA. Probably not involved in DNA repair. The polypeptide is RNA polymerase-associated protein RapA (Escherichia coli O139:H28 (strain E24377A / ETEC)).